We begin with the raw amino-acid sequence, 317 residues long: Protein translocase subunit SecF (317 aa).

The next 6 helical transmembrane spans lie at 11-31 (FYLLSLLIIIPGTIYLLLFGL), 135-155 (RSIVAIALASLGILGYIAFAF), 166-186 (ICAIIAMLHDVLVVVGIFAIL), 197-217 (LFVTALLTVIGFSVHDTIVVF), 244-266 (LVRSVNTSMTVIFTLLALYFFGG), and 276-298 (LLIGIVSGTYSSIFNASLLLVSW).

It belongs to the SecD/SecF family. SecF subfamily. In terms of assembly, forms a complex with SecD. Part of the essential Sec protein translocation apparatus which comprises SecA, SecYEG and auxiliary proteins SecDF. Other proteins may also be involved.

The protein localises to the cell membrane. Part of the Sec protein translocase complex. Interacts with the SecYEG preprotein conducting channel. SecDF uses the proton motive force (PMF) to complete protein translocation after the ATP-dependent function of SecA. The polypeptide is Protein translocase subunit SecF (Thermobaculum terrenum (strain ATCC BAA-798 / CCMEE 7001 / YNP1)).